The primary structure comprises 331 residues: GTPase Obg (331 aa).

Positions 1–159 (MQFIDQARIA…RELQLELKLL (159 aa)) constitute an Obg domain. In terms of domain architecture, OBG-type G spans 160-328 (AEVGLVGLPN…LLQQVWQELG (169 aa)). GTP contacts are provided by residues 166–173 (GLPNAGKS), 191–195 (FTTLV), 213–216 (DIPG), 280–283 (SKSE), and 309–311 (SAV). Mg(2+) is bound by residues Ser173 and Thr193.

This sequence belongs to the TRAFAC class OBG-HflX-like GTPase superfamily. OBG GTPase family. As to quaternary structure, monomer. Mg(2+) is required as a cofactor.

It localises to the cytoplasm. An essential GTPase which binds GTP, GDP and possibly (p)ppGpp with moderate affinity, with high nucleotide exchange rates and a fairly low GTP hydrolysis rate. Plays a role in control of the cell cycle, stress response, ribosome biogenesis and in those bacteria that undergo differentiation, in morphogenesis control. This chain is GTPase Obg, found in Synechococcus sp. (strain RCC307).